Here is a 394-residue protein sequence, read N- to C-terminus: Mannosyl-3-phosphoglycerate synthase (394 aa).

The protein belongs to the glycosyltransferase 2 family.

The protein resides in the cytoplasm. It carries out the reaction (2R)-3-phosphoglycerate + GDP-alpha-D-mannose = 2-O-(alpha-D-mannosyl)-3-phosphoglycerate + GDP + H(+). The protein operates within carbohydrate biosynthesis; 2-(alpha-D-mannosyl)-D-glycerate biosynthesis; 2-(alpha-D-mannosyl)-D-glycerate from GDP-alpha-D-mannose (MPG route): step 1/2. Functionally, transfers a mannosyl group from GDP-mannose to phosphoglycerate to form mannosyl-3-phosphoglycerate (MPG). The chain is Mannosyl-3-phosphoglycerate synthase (mngA) from Pyrococcus furiosus (strain ATCC 43587 / DSM 3638 / JCM 8422 / Vc1).